Here is a 645-residue protein sequence, read N- to C-terminus: Pro-neuregulin-1, membrane-bound isoform (645 aa).

A propeptide spanning residues 1-19 (MSERKEGRGKGKGKKKDRG) is cleaved from the precursor. Residues 1 to 52 (MSERKEGRGKGKGKKKDRGSRGKPAPAEGDPSPALPPRLKEMKSQESAAGSK) form a disordered region. The Extracellular segment spans residues 20–247 (SRGKPAPAEG…MEAEELYQKR (228 aa)). The Ig-like C2-type domain maps to 37–128 (PRLKEMKSQE…GNDSASANIT (92 aa)). Residues Cys57 and Cys112 are joined by a disulfide bond. Residues 139 to 164 (MSASTERPYVSSESPIRISVSTEGAN) show a composition bias toward polar residues. Residues 139–175 (MSASTERPYVSSESPIRISVSTEGANTSSSTSTSTTG) are disordered. Low complexity predominate over residues 165–175 (TSSSTSTSTTG). The 45-residue stretch at 178–222 (HLIKCAEKEKTFCVNGGECFMVKDLSNPSRYLCKCPNEFTGDRCQ) folds into the EGF-like domain. Disulfide bonds link Cys182-Cys196, Cys190-Cys210, and Cys212-Cys221. Residues 248–268 (VLTITGICIALLVVGIMCVVA) form a helical membrane-spanning segment. Over 269 to 645 (YCKTKKQRQK…VIANQDPIAV (377 aa)) the chain is Cytoplasmic. The span at 340 to 355 (SHYTSTAHHSTTVTQT) shows a compositional bias: low complexity. Disordered stretches follow at residues 340 to 364 (SHYT…SNGH), 380 to 406 (SVEN…PREC), 433 to 463 (MTTP…PVSS), and 531 to 593 (ETTQ…DTPF). A compositionally biased stretch (gly residues) spans 392–402 (GPRGRLHGLGG). Residues 547-557 (TNSRRAKRTKP) are compositionally biased toward basic residues. Low complexity predominate over residues 568–579 (DSNPSSVSSNSE).

It belongs to the neuregulin family. The cytoplasmic domain interacts with the LIM domain region of LIMK1. Forms a ternary complex with ERBB3 and ITGAV:ITGB3 or ITGA6:ITGB4. Interacts with NRDC and BACE1. Proteolytic cleavage close to the plasma membrane on the external face leads to the release of the soluble growth factor form. Post-translationally, N- and O-glycosylated. Extensive glycosylation precedes the proteolytic cleavage.

The protein resides in the cell membrane. Its subcellular location is the secreted. Its function is as follows. Direct ligand for ERBB3 and ERBB4 tyrosine kinase receptors. Concomitantly recruits ERBB1 and ERBB2 coreceptors, resulting in ligand-stimulated tyrosine phosphorylation and activation of the ERBB receptors. Perform diverse functions such as inducing growth and differentiation of epithelial, glial, neuronal, and skeletal muscle cells; inducing expression of acetylcholine receptor in synaptic vesicles during the formation of the neuromuscular junction; stimulating lobuloalveolar budding and milk production in the mammary gland and inducing differentiation of mammary tumor cells; stimulating Schwann cell proliferation; implication in the development of the myocardium such as trabeculation of the developing heart. Binds to ERBB4 and ERBB3. Acts as a ligand for integrins and binds (via EGF domain) to integrins ITGAV:ITGB3 or ITGA6:ITGB4. Its binding to integrins and subsequent ternary complex formation with integrins and ERRB3 are essential for NRG1-ERBB signaling. Induces the phosphorylation and activation of MAPK3/ERK1, MAPK1/ERK2 and AKT1, and ligand-dependent ERBB4 endocytosis is essential for the NRG1-mediated activation of these kinases in neurons. The protein is Pro-neuregulin-1, membrane-bound isoform of Mus musculus (Mouse).